Here is a 402-residue protein sequence, read N- to C-terminus: Multidrug resistance protein MdtH (402 aa).

Residues 1-12 (MSRVSQARNLGK) lie on the Cytoplasmic side of the membrane. A helical transmembrane segment spans residues 13–33 (YFLLIDNMLVVLGFFVVFPLI). The Periplasmic portion of the chain corresponds to 34 to 98 (SIRFVDQMGW…GFATMGIAHE (65 aa)). A helical membrane pass occupies residues 99 to 116 (PWLLWFSCLLSGLGGTLF). Topologically, residues 117-138 (DPPRSALVVKLIRPQQRGRFFS) are cytoplasmic. Residues 139 to 159 (LLMMQDSAGAVIGALLGSWLL) traverse the membrane as a helical segment. The Periplasmic portion of the chain corresponds to 160-164 (QYDFR). A helical membrane pass occupies residues 165 to 185 (LVCATGAVLFVLCAAFNAWLL). The Cytoplasmic portion of the chain corresponds to 186 to 213 (PAWKLSTVRTPVREGMTRVMRDKRFVTY). The chain crosses the membrane as a helical span at residues 214-234 (VLTLAGYYMLAVQVMLMLPIM). Topologically, residues 235–243 (VNDVAGAPS) are periplasmic. Residues 244–264 (AVKWMYAIEACLSLTLLYPIA) traverse the membrane as a helical segment. Residues 265–276 (RWSEKHFRLEHR) lie on the Cytoplasmic side of the membrane. A helical transmembrane segment spans residues 277-297 (LMAGLLIMSLSMMPVGMVSGL). Residues 298–299 (QQ) are Periplasmic-facing. The helical transmembrane segment at 300–320 (LFTLICLFYIGSIIAEPARET) threads the bilayer. At 321-339 (LSASLADARARGSYMGFSR) the chain is on the cytoplasmic side. The helical transmembrane segment at 340–360 (LGLAIGGAIGYIGGGWLFDLG) threads the bilayer. The Periplasmic segment spans residues 361–367 (KSAHQPE). Residues 368–388 (LPWMMLGIIGIFTFLALGWQF) traverse the membrane as a helical segment. The Cytoplasmic portion of the chain corresponds to 389–402 (SQKRTARRLLERDA).

It belongs to the major facilitator superfamily. DHA1 family. MdtH (TC 2.A.1.2.21) subfamily.

The protein localises to the cell inner membrane. Functionally, confers resistance to norfloxacin and enoxacin. This Escherichia coli O7:K1 (strain IAI39 / ExPEC) protein is Multidrug resistance protein MdtH.